Consider the following 272-residue polypeptide: MICOS complex subunit MIC27 (272 aa).

The N-terminal 24 residues, 1 to 24 (MAAKVARLAAAASSLPFVCAVYAE), are a transit peptide targeting the mitochondrion. At 28–107 (SKSQLVKPKQ…YVYLKNPPPD (80 aa)) the chain is on the mitochondrial intermembrane side. Residues 108–126 (FLPRVGIITISGLAGVVLA) traverse the membrane as a helical segment. Residues 127-134 (RKDSRFKK) lie on the Mitochondrial matrix side of the membrane. A helical transmembrane segment spans residues 135 to 152 (IAYPLGLTTLGISVCYPA). At 153–272 (QAVVIAKITG…EDVDMYSTRS (120 aa)) the chain is on the mitochondrial intermembrane side. Residues 187–272 (SKLQQESKSV…EDVDMYSTRS (86 aa)) are disordered. Polar residues-rich tracts occupy residues 188–198 (KLQQESKSVTQ) and 206–245 (ISNV…TVKT).

The protein belongs to the apolipoprotein O/MICOS complex subunit Mic27 family. Component of the mitochondrial contact site and cristae organizing system (MICOS) complex (also known as MINOS or MitOS complex).

The protein localises to the mitochondrion inner membrane. Its function is as follows. Component of the MICOS complex, a large protein complex of the mitochondrial inner membrane that plays crucial roles in the maintenance of crista junctions, inner membrane architecture, and formation of contact sites to the outer membrane. The sequence is that of MICOS complex subunit MIC27 (APOOL) from Gallus gallus (Chicken).